The following is a 274-amino-acid chain: MCAFVPHVPRHSRGDNPPSASTASPAVLTLTGERTIPDLDIENYWFRRHQVVYQRLAPRCTARDVLEAGCGEGYGADLIACVARQVIAVDYDETAVAHVRSRYPRVEVMQANLAELPLPDASVDVVVNFQVIEHLWDQARFVRECARVLRGSGLLMVSTPNRITFSPGRDTPINPFHTRELNADELTSLLIDAGFVDVAMCGLFHGPRLRDMDARHGGSIIDAQIMRAVAGAPWPPELAADVAAVTTADFEMVAAGHDRDIDDSLDLIAIAVRP.

The interval 1–24 (MCAFVPHVPRHSRGDNPPSASTAS) is disordered.

The protein belongs to the methyltransferase superfamily.

Probable S-adenosylmethionine-dependent methyltransferase required for the 6-O-methylation of the polysaccharide backbone of 6-O-methylglucosyl lipopolysaccharides (MGLP). In Mycobacterium tuberculosis (strain CDC 1551 / Oshkosh), this protein is Probable S-adenosylmethionine-dependent methyltransferase MT3114.